The chain runs to 35 residues: Jingzhaotoxin F6-27.63 (35 aa).

Disulfide bonds link cysteine 2/cysteine 17, cysteine 9/cysteine 22, and cysteine 16/cysteine 29.

It belongs to the neurotoxin 10 (Hwtx-1) family. 49 (Jztx-F6) subfamily. In terms of tissue distribution, expressed by the venom gland.

It is found in the secreted. Functionally, probable ion channel inhibitor. This is Jingzhaotoxin F6-27.63 from Chilobrachys guangxiensis (Chinese earth tiger tarantula).